The following is a 2443-amino-acid chain: Non-reducing polyketide synthase olcA (2443 aa).

A Ketosynthase family 3 (KS3) domain is found at 5-442 (IEPIAIVGTG…GANVHAILES (438 aa)). Active-site for beta-ketoacyl synthase activity residues include C178, H317, and H362. The malonyl-CoA:ACP transacylase (MAT) domain stretch occupies residues 550–885 (GVFTGQGAQW…AAIGSLWTYL (336 aa)). The For acyl/malonyl transferase activity role is filled by S645. The segment at 940–1070 (NCLLGVLSPD…GVLTMTLGSA (131 aa)) is N-terminal hotdog fold. Positions 940–1231 (NCLLGVLSPD…LVPLLEDLAD (292 aa)) constitute a PKS/mFAS DH domain. Residues 989–1497 (ALESAKLIAG…SLPVTISNMR (509 aa)) form a product template (PT) domain region. Positions 1085–1231 (MRAVDIEDFY…LVPLLEDLAD (147 aa)) are C-terminal hotdog fold. Residues 1771 to 2159 (NKRYLAHTHV…LERFTCALPP (389 aa)) form a methyltransferase (CMeT) domain region. The Carrier domain occupies 2359-2434 (EILTSHLLTQ…EITSSAAAKL (76 aa)). Residue S2394 is modified to O-(pantetheine 4'-phosphoryl)serine.

The catalysed reaction is nicotinyl-CoA + 2 malonyl-CoA + H(+) = 4-hydroxy-6-(pyridin-3-yl)-2H-pyran-2-one + 2 CO2 + 3 CoA. It functions in the pathway secondary metabolite biosynthesis; terpenoid biosynthesis. Non-reducing polyketide synthase; part of the gene cluster that mediates the biosynthesis of 15-deoxyoxalicine B. The first step of the pathway is the synthesis of nicotinyl-CoA from nicotinic acid by the nicotinic acid-CoA ligase olcI. Nicotinyl-CoA is then a substrate of polyketide synthase olcA to produce 4-hydroxy-6-(3-pyridinyl)-2H-pyran-2-one (HPPO) which is further prenylated by the polyprenyl transferase olcH to yield geranylgeranyl-HPPO. Geranylgeranyl pyrophosphate is provided by the cluster-specific geranylgeranyl pyrophosphate synthase olcC. The FAD-dependent monooxygenase olcE catalyzes the epoxidation of geranylgeranyl-HPPO and the terpene cyclase olcD catalyzes the cyclization of the terpenoid component, resulting in the formation of the tricyclic terpene moiety seen in predecaturin E. The cytochrome P450 monooxygenase then catalyzes the allylic oxidation of predecaturin E, which is followed by spirocylization with concomitant loss of one molecule of water to form decaturin E. Decaturin E is the substrate of the cytochrome P450 monooxygenase olcJ which hydroxylates it at the C-29 position to form decaturin F. The short-chain dehydrogenase/reductase olcF may catalyze the oxidation of decaturin F to generate the 29-hydroxyl-27-one intermediate, and subsequent hemiacetal formation probably leads to the formation of decaturin C. The dioxygenase olcK may be a peroxisomal enzyme that catalyzes the hydroxylation of decaturin C into decaturin A once decaturin C is shuttled into the peroxisome by the MFS transporter olcL. Finally the cytochrome P450 monooxygenase olcB catalyzes the oxidative rearrangement to yield 15-deoxyoxalicine B. In the absence of olcJ, decaturin E may be shunted to a pathway in which it is oxidized to a ketone, possibly by olcF, to form decaturin D, which undergoes further allylic oxidation to yield decaturin G. Moreover, in the absence of oclK or oclL, oclB can convert decaturin C into 15-deoxyoxalicine A. The chain is Non-reducing polyketide synthase olcA from Penicillium canescens.